The chain runs to 125 residues: Small ribosomal subunit protein bS6 (125 aa).

Residues 96 to 125 (ETGASSMMKTVEREEARKASQAEFAAANER) are disordered. Basic and acidic residues predominate over residues 105-115 (TVEREEARKAS).

It belongs to the bacterial ribosomal protein bS6 family.

Binds together with bS18 to 16S ribosomal RNA. The polypeptide is Small ribosomal subunit protein bS6 (Paracidovorax citrulli (strain AAC00-1) (Acidovorax citrulli)).